We begin with the raw amino-acid sequence, 420 residues long: Phospholipase A1-II 3 (420 aa).

Positions 1–21 (MCCFLLVSVLLATTLTDVASA) are cleaved as a signal peptide. Residue N231 is glycosylated (N-linked (GlcNAc...) asparagine). S240 serves as the catalytic Acyl-ester intermediate. S240 functions as the Charge relay system in the catalytic mechanism. An N-linked (GlcNAc...) asparagine glycan is attached at N294. Active-site charge relay system residues include D305 and H343. The stretch at 367 to 388 (VVDRDLALVNKEVDALRDEYQV) forms a coiled coil. N403 carries N-linked (GlcNAc...) asparagine glycosylation.

It belongs to the AB hydrolase superfamily. Lipase family.

It localises to the secreted. In terms of biological role, acylhydrolase that catalyzes the hydrolysis of phospholipids at the sn-1 position. The polypeptide is Phospholipase A1-II 3 (Oryza sativa subsp. indica (Rice)).